The chain runs to 307 residues: Major immediate early protein (307 aa).

The segment at 39–92 (CAVCLETYCVQSNNIIDFLMPSECTHLFCYKCVLNMYKNAMNVPRAAVSCPMCN) adopts an RING-type zinc-finger fold.

This Orgyia pseudotsugata multicapsid polyhedrosis virus (OpMNPV) protein is Major immediate early protein (PE38).